The primary structure comprises 452 residues: Tylactone mycaminosyltransferase (452 aa).

Residues 1 to 16 are compositionally biased toward basic and acidic residues; sequence MRRALDDRRRGPHGPE. A disordered region spans residues 1 to 20; the sequence is MRRALDDRRRGPHGPEGKPP.

It belongs to the glycosyltransferase 28 family.

The catalysed reaction is tylactone + dTDP-alpha-D-mycaminose = 5-O-beta-D-mycaminosyltylactone + dTDP + H(+). The protein operates within antibiotic biosynthesis; tylosin biosynthesis. Its activity is regulated as follows. The activity of TylM2 is substantially increased by the addition of the accessory protein TylM3. In terms of biological role, involved in the biosynthesis of the macrolide antibiotic tylosin derived from the polyketide lactone tylactone. Catalyzes the transfer of alpha-D-mycaminosyl from dTDP-alpha-D-mycaminose to the 5-hydroxyl group of tylactone to yield 5-O-mycaminosytylactone. It can also accept 16-membered tylactone and 12-membered ring macrolide. This Streptomyces fradiae (Streptomyces roseoflavus) protein is Tylactone mycaminosyltransferase.